The chain runs to 436 residues: 23S rRNA (uracil(1939)-C(5))-methyltransferase RlmD (436 aa).

Residues 10–68 (KQKTTQKIVAEIQDLDYQGLGVAKIQGKTWFIENALPTEKVEAVVTDEKRQYGLATAQK) enclose the TRAM domain. Residues Cys81, Cys87, Cys90, and Cys168 each contribute to the [4Fe-4S] cluster site. Residues Gln270, Phe299, Asn304, Glu320, Asp347, and Asp368 each contribute to the S-adenosyl-L-methionine site. Cys394 serves as the catalytic Nucleophile.

The protein belongs to the class I-like SAM-binding methyltransferase superfamily. RNA M5U methyltransferase family. RlmD subfamily.

It catalyses the reaction uridine(1939) in 23S rRNA + S-adenosyl-L-methionine = 5-methyluridine(1939) in 23S rRNA + S-adenosyl-L-homocysteine + H(+). In terms of biological role, catalyzes the formation of 5-methyl-uridine at position 1939 (m5U1939) in 23S rRNA. The chain is 23S rRNA (uracil(1939)-C(5))-methyltransferase RlmD from Haemophilus parainfluenzae (strain T3T1).